The sequence spans 273 residues: Large ribosomal subunit protein uL2cz/uL2cy (273 aa).

Disordered stretches follow at residues 1–22 and 223–254; these read MAIH…DSQV and MNPV…PALG.

Belongs to the universal ribosomal protein uL2 family. As to quaternary structure, part of the 50S ribosomal subunit.

It is found in the plastid. The protein localises to the chloroplast. This chain is Large ribosomal subunit protein uL2cz/uL2cy (rpl2-A), found in Drimys granadensis.